A 545-amino-acid polypeptide reads, in one-letter code: Purple acid phosphatase 13 (545 aa).

The signal sequence occupies residues 1–25 (MVVKYTMSMSFFVIFASTVTIIVHG). Residues Asn125 and Asn145 are each glycosylated (N-linked (GlcNAc...) asparagine). Asp203 contributes to the Fe cation binding site. Asn209 carries N-linked (GlcNAc...) asparagine glycosylation. A Fe cation-binding site is contributed by Tyr233. Asn240, Asn254, Asn306, Asn321, Asn351, and Asn367 each carry an N-linked (GlcNAc...) asparagine glycan. The active-site Proton donor is the His389. His416 is a binding site for Zn(2+). 416–418 (HVD) is a substrate binding site. 4 N-linked (GlcNAc...) asparagine glycosylation sites follow: Asn428, Asn466, Asn475, and Asn510.

Belongs to the metallophosphoesterase superfamily. Purple acid phosphatase family. As to quaternary structure, homodimer. It depends on Fe cation as a cofactor. Zn(2+) serves as cofactor. In terms of tissue distribution, expressed in stems, leaves, flowers and siliques.

It is found in the secreted. It catalyses the reaction a phosphate monoester + H2O = an alcohol + phosphate. The sequence is that of Purple acid phosphatase 13 (PAP13) from Arabidopsis thaliana (Mouse-ear cress).